The primary structure comprises 68 residues: UPF0253 protein VFMJ11_0680 (68 aa).

Belongs to the UPF0253 family.

The protein is UPF0253 protein VFMJ11_0680 of Aliivibrio fischeri (strain MJ11) (Vibrio fischeri).